Reading from the N-terminus, the 153-residue chain is Endoribonuclease YbeY (153 aa).

The Zn(2+) site is built by His114, His118, and His124.

It belongs to the endoribonuclease YbeY family. The cofactor is Zn(2+).

The protein resides in the cytoplasm. In terms of biological role, single strand-specific metallo-endoribonuclease involved in late-stage 70S ribosome quality control and in maturation of the 3' terminus of the 16S rRNA. The polypeptide is Endoribonuclease YbeY (Shewanella sp. (strain MR-7)).